A 440-amino-acid polypeptide reads, in one-letter code: C4-dicarboxylate transport protein (440 aa).

Helical transmembrane passes span 15 to 35 (VLVA…TGVA), 46 to 66 (LIKM…IAGM), 78 to 98 (YALL…LVVV), 146 to 166 (AFAN…GFAL), 190 to 210 (IINM…AFTI), 224 to 244 (LMAC…GGIC), 291 to 311 (VVGL…SIYL), 332 to 352 (ITLL…TGSG), and 354 to 374 (IVLA…LALI). Residues 419 to 440 (GGSPLVDTRPTDDLGVAEGPAR) form a disordered region.

The protein belongs to the dicarboxylate/amino acid:cation symporter (DAACS) (TC 2.A.23) family.

The protein localises to the cell inner membrane. Functionally, responsible for the transport of dicarboxylates such as succinate, fumarate, and malate from the periplasm across the membrane. In Pseudomonas entomophila (strain L48), this protein is C4-dicarboxylate transport protein.